Consider the following 517-residue polypeptide: NEDD8-activating enzyme E1 regulatory subunit (517 aa).

This sequence belongs to the ubiquitin-activating E1 family. ULA1 subfamily. Heterodimer of uba3 and ula1. The complex binds NEDD8/ubl1 and ubc12.

Its subcellular location is the cytoplasm. The protein localises to the nucleus. The protein operates within protein modification; protein neddylation. Its function is as follows. Regulatory subunit of the dimeric uba3-ula1 E1 enzyme. E1 activates NEDD8/ubl1 by first adenylating its C-terminal glycine residue with ATP, thereafter linking this residue to the side chain of the catalytic cysteine, yielding a NEDD8-UBA3 thioester and free AMP. E1 finally transfers NEDD8 to the catalytic cysteine of ubc12. The polypeptide is NEDD8-activating enzyme E1 regulatory subunit (uba5) (Schizosaccharomyces pombe (strain 972 / ATCC 24843) (Fission yeast)).